The sequence spans 102 residues: Large ribosomal subunit protein bL21 (102 aa).

Belongs to the bacterial ribosomal protein bL21 family. Part of the 50S ribosomal subunit. Contacts protein L20.

Functionally, this protein binds to 23S rRNA in the presence of protein L20. The protein is Large ribosomal subunit protein bL21 of Leptospira biflexa serovar Patoc (strain Patoc 1 / Ames).